Here is a 314-residue protein sequence, read N- to C-terminus: Galectin-12 (314 aa).

2 Galectin domains span residues Tyr27–Leu161 and Cys190–Cys314.

It localises to the nucleus. Binds lactose. May participate in the apoptosis of adipocytes. This Mus musculus (Mouse) protein is Galectin-12 (Lgals12).